The sequence spans 1157 residues: ATP-dependent helicase/deoxyribonuclease subunit B (1157 aa).

The UvrD-like helicase ATP-binding domain occupies 1-299 (MSIRFIIGRA…SHLEKYFFVR (299 aa)). 8 to 15 (GRAGAGKT) contributes to the ATP binding site. Positions 279–590 (GNTARFKSPA…LVASLERSRN (312 aa)) constitute a UvrD-like helicase C-terminal domain. Residues C792, C1112, C1115, and C1121 each contribute to the [4Fe-4S] cluster site.

The protein belongs to the helicase family. AddB/RexB type 1 subfamily. As to quaternary structure, heterodimer of AddA and AddB. The cofactor is Mg(2+). [4Fe-4S] cluster serves as cofactor.

The heterodimer acts as both an ATP-dependent DNA helicase and an ATP-dependent, dual-direction single-stranded exonuclease. Recognizes the chi site generating a DNA molecule suitable for the initiation of homologous recombination. The AddB subunit has 5' -&gt; 3' nuclease activity but not helicase activity. In Pelotomaculum thermopropionicum (strain DSM 13744 / JCM 10971 / SI), this protein is ATP-dependent helicase/deoxyribonuclease subunit B.